A 38-amino-acid chain; its full sequence is Large ribosomal subunit protein bL36 (38 aa).

The protein belongs to the bacterial ribosomal protein bL36 family.

The polypeptide is Large ribosomal subunit protein bL36 (Mycoplasma mobile (strain ATCC 43663 / 163K / NCTC 11711) (Mesomycoplasma mobile)).